Consider the following 344-residue polypeptide: C-C chemokine receptor-like 2 (344 aa).

Residues 1–43 (MANYTLAPEDEYDVLIEGELESDEAEQCDRYDTWALSAQLVPS) are Extracellular-facing. Asn-3 carries an N-linked (GlcNAc...) asparagine glycan. Residues 44-64 (LCSAVFVVGVLDNLLVVLILV) form a helical membrane-spanning segment. Residues 65-74 (KYKGLKRVEN) are Cytoplasmic-facing. Residues 75–95 (IYLLNLAVSNLCFLLTLPFWA) traverse the membrane as a helical segment. Over 96–104 (HAGGDPMCK) the chain is Extracellular. Cysteines 103 and 181 form a disulfide. Residues 105-125 (ILIGLYFVGLYSETFFNCLLT) traverse the membrane as a helical segment. The Cytoplasmic segment spans residues 126-148 (LQRYLVFLHKGNFFSVRRRVPCG). Residues 149–169 (IVTSAVAWVTAILATVPEFAV) traverse the membrane as a helical segment. Topologically, residues 170–198 (YKPQMEDPKYKCAFSRTPFLPADETFWKH) are extracellular. Residues 199 to 219 (FLTLKMNVSVLVFPLFIFTFL) traverse the membrane as a helical segment. Residues 220 to 238 (YVQMRKTLRFGEQRYSLFK) lie on the Cytoplasmic side of the membrane. Residues 239–259 (LVFAIMVVFLLMWAPYNIALF) traverse the membrane as a helical segment. At 260–281 (LSTFKEHFSLSDCKSNYNLDKS) the chain is on the extracellular side. A helical membrane pass occupies residues 282-302 (VLITKLIATTHCCVNPLLYVF). Residues 303–344 (LDGTFRKYLCRFFHRRSNTPRQPRRRFAQGTSREEPDRSTEV) are Cytoplasmic-facing. A disordered region spans residues 323 to 344 (RQPRRRFAQGTSREEPDRSTEV). Positions 334–344 (SREEPDRSTEV) are enriched in basic and acidic residues.

It belongs to the G-protein coupled receptor 1 family.

It is found in the cell membrane. Functionally, receptor for CCL19 and chemerin/RARRES2. Does not appear to be a signaling receptor, but may have a role in modulating chemokine-triggered immune responses by capturing and internalizing CCL19 or by presenting RARRES2 ligand to CMKLR1, a functional signaling receptor. Plays a critical role for the development of Th2 responses. The polypeptide is C-C chemokine receptor-like 2 (CCRL2) (Macaca mulatta (Rhesus macaque)).